Here is an 87-residue protein sequence, read N- to C-terminus: Large ribosomal subunit protein bL31B (87 aa).

This sequence belongs to the bacterial ribosomal protein bL31 family. Type B subfamily. In terms of assembly, part of the 50S ribosomal subunit.

The protein is Large ribosomal subunit protein bL31B of Pseudomonas aeruginosa (strain LESB58).